We begin with the raw amino-acid sequence, 385 residues long: Mitochondrial protein C2orf69 (385 aa).

The transit peptide at 1–24 (MWGFRLLRSPPLLLLLPQLGIGNA) directs the protein to the mitochondrion.

This sequence belongs to the C2orf69 family.

The protein resides in the mitochondrion matrix. Its function is as follows. May play a role in the respiratory chain. This is Mitochondrial protein C2orf69 (C2orf69) from Homo sapiens (Human).